The chain runs to 131 residues: MGSCVGKERSDEEDKIDFKGGNVHVISNKENWDHKIAEANKDGKIVIANFSAAWCGPCRVIAPVYAEMSQTYPQFMFLTIDVDELMDFSSSWDIRATPTFFFLKNGEQVDKLVGANKPELEKKVAALADSA.

In terms of domain architecture, Thioredoxin spans 3-129; that stretch reads SCVGKERSDE…LEKKVAALAD (127 aa). Active-site nucleophile residues include C55 and C58. The cysteines at positions 55 and 58 are disulfide-linked.

The protein belongs to the thioredoxin family. Plant H-type subfamily.

It is found in the cytoplasm. Probable thiol-disulfide oxidoreductase that may be involved in the redox regulation of a number of cytosolic enzymes. The chain is Thioredoxin H4-1 from Oryza sativa subsp. japonica (Rice).